The sequence spans 203 residues: MLKIGLTGSIGMGKSTVGKLFAEAGIPLNDSDAVVHNLYAGEAAPLVNAAFPGTMKDGAVDRHELGRQLALDPEGFKRLEAIVHPLVRKREMEFLAKQQADGAEMVLLDIPLLFETGAWERVDVIVVVSTDSQIQRQRVLAREDMTEEKFDMILSRQTPDAEKRRRADYLVDTSHSIAETRAQVLEIIAELKMRIAKGDFRNA.

Residues 3–202 (KIGLTGSIGM…MRIAKGDFRN (200 aa)) enclose the DPCK domain. Residue 11-16 (GMGKST) coordinates ATP.

Belongs to the CoaE family.

The protein resides in the cytoplasm. It carries out the reaction 3'-dephospho-CoA + ATP = ADP + CoA + H(+). It functions in the pathway cofactor biosynthesis; coenzyme A biosynthesis; CoA from (R)-pantothenate: step 5/5. In terms of biological role, catalyzes the phosphorylation of the 3'-hydroxyl group of dephosphocoenzyme A to form coenzyme A. In Rhizobium etli (strain ATCC 51251 / DSM 11541 / JCM 21823 / NBRC 15573 / CFN 42), this protein is Dephospho-CoA kinase.